Reading from the N-terminus, the 72-residue chain is Translation initiation factor IF-1 (72 aa).

Residues 1–72 (MAKEDTLEFP…SKGRINYRFK (72 aa)) enclose the S1-like domain.

The protein belongs to the IF-1 family. In terms of assembly, component of the 30S ribosomal translation pre-initiation complex which assembles on the 30S ribosome in the order IF-2 and IF-3, IF-1 and N-formylmethionyl-tRNA(fMet); mRNA recruitment can occur at any time during PIC assembly.

The protein localises to the cytoplasm. Its function is as follows. One of the essential components for the initiation of protein synthesis. Stabilizes the binding of IF-2 and IF-3 on the 30S subunit to which N-formylmethionyl-tRNA(fMet) subsequently binds. Helps modulate mRNA selection, yielding the 30S pre-initiation complex (PIC). Upon addition of the 50S ribosomal subunit IF-1, IF-2 and IF-3 are released leaving the mature 70S translation initiation complex. The sequence is that of Translation initiation factor IF-1 from Cereibacter sphaeroides (strain ATCC 17029 / ATH 2.4.9) (Rhodobacter sphaeroides).